The primary structure comprises 172 residues: Putative phosphoesterase BCAH820_1309 (172 aa).

His-34 serves as the catalytic Proton donor. 2 consecutive short sequence motifs (HXTX) follow at residues 34–37 (HITL) and 115–118 (HLTI). Residue His-115 is the Proton acceptor of the active site.

The protein belongs to the 2H phosphoesterase superfamily. YjcG family.

This Bacillus cereus (strain AH820) protein is Putative phosphoesterase BCAH820_1309.